The following is a 346-amino-acid chain: Phosphate acyltransferase (346 aa).

It belongs to the PlsX family. As to quaternary structure, homodimer. Probably interacts with PlsY.

The protein resides in the cytoplasm. It carries out the reaction a fatty acyl-[ACP] + phosphate = an acyl phosphate + holo-[ACP]. It functions in the pathway lipid metabolism; phospholipid metabolism. Functionally, catalyzes the reversible formation of acyl-phosphate (acyl-PO(4)) from acyl-[acyl-carrier-protein] (acyl-ACP). This enzyme utilizes acyl-ACP as fatty acyl donor, but not acyl-CoA. The chain is Phosphate acyltransferase from Delftia acidovorans (strain DSM 14801 / SPH-1).